The sequence spans 397 residues: Serpin-Z7 (397 aa).

N-acetylalanine is present on A2. The RCL stretch occupies residues 344-368 (GTKAGAATGDVIVDRSLPIRMDFVA).

It belongs to the serpin family. In terms of tissue distribution, highly expressed in endosperm, at intermediate level in embryo and at lower levels in roots.

In terms of biological role, inhibits chymotrypsin in vitro. This Hordeum vulgare (Barley) protein is Serpin-Z7 (PAZ7).